Consider the following 231-residue polypeptide: Putative Nudix hydrolase FPV054 (231 aa).

A Nudix hydrolase domain is found at serine 74–phenylalanine 217. The Nudix box motif lies at glycine 125 to aspartate 146. Glutamate 131 lines the Mg(2+) pocket. Glutamate 140 (nucleophile) is an active-site residue. Mg(2+)-binding residues include glutamate 144 and aspartate 165.

Belongs to the Nudix hydrolase family. Requires Mg(2+) as cofactor. Mn(2+) serves as cofactor.

Functionally, decapping enzyme required for the removal of the 5'-end m7GpppN cap tethered to viral and host mRNAs to allow their decay in cells. May therefore accelerate viral and cellular mRNA turnover to eliminate competing host mRNAs and allow stage-specific synthesis of viral proteins. Acceleration of the turnover of cellular transcripts may even promote the shutoff of host protein synthesis. Does not cleave unmethylated RNAs or RNAs shorter than 24 nucleotides. The chain is Putative Nudix hydrolase FPV054 from Vertebrata (FPV).